A 428-amino-acid polypeptide reads, in one-letter code: Glutamyl-tRNA reductase (428 aa).

Residues 50-53, S110, 115-117, and Q121 each bind substrate; these read TCNR and ETQ. C51 acts as the Nucleophile in catalysis. NADP(+) is bound at residue 190 to 195; sequence GAGEMG.

It belongs to the glutamyl-tRNA reductase family. Homodimer.

The catalysed reaction is (S)-4-amino-5-oxopentanoate + tRNA(Glu) + NADP(+) = L-glutamyl-tRNA(Glu) + NADPH + H(+). The protein operates within porphyrin-containing compound metabolism; protoporphyrin-IX biosynthesis; 5-aminolevulinate from L-glutamyl-tRNA(Glu): step 1/2. Functionally, catalyzes the NADPH-dependent reduction of glutamyl-tRNA(Glu) to glutamate 1-semialdehyde (GSA). The protein is Glutamyl-tRNA reductase of Campylobacter curvus (strain 525.92).